Consider the following 186-residue polypeptide: Elongation factor P (186 aa).

This sequence belongs to the elongation factor P family.

It localises to the cytoplasm. It functions in the pathway protein biosynthesis; polypeptide chain elongation. Functionally, involved in peptide bond synthesis. Stimulates efficient translation and peptide-bond synthesis on native or reconstituted 70S ribosomes in vitro. Probably functions indirectly by altering the affinity of the ribosome for aminoacyl-tRNA, thus increasing their reactivity as acceptors for peptidyl transferase. The sequence is that of Elongation factor P from Polynucleobacter asymbioticus (strain DSM 18221 / CIP 109841 / QLW-P1DMWA-1) (Polynucleobacter necessarius subsp. asymbioticus).